Consider the following 131-residue polypeptide: Small ribosomal subunit protein uS11 (131 aa).

Belongs to the universal ribosomal protein uS11 family. In terms of assembly, part of the 30S ribosomal subunit. Interacts with proteins S7 and S18. Binds to IF-3.

In terms of biological role, located on the platform of the 30S subunit, it bridges several disparate RNA helices of the 16S rRNA. Forms part of the Shine-Dalgarno cleft in the 70S ribosome. This chain is Small ribosomal subunit protein uS11, found in Wigglesworthia glossinidia brevipalpis.